Here is a 431-residue protein sequence, read N- to C-terminus: 5'-deoxyadenosine deaminase (431 aa).

2 residues coordinate Zn(2+): H65 and H67. Substrate contacts are provided by E94 and H185. H212 provides a ligand contact to Zn(2+). The substrate site is built by E215 and D300. Zn(2+) is bound at residue D300.

This sequence belongs to the metallo-dependent hydrolases superfamily. MTA/SAH deaminase family. Homotetramer. The cofactor is Zn(2+).

The catalysed reaction is 5'-deoxyadenosine + H2O + H(+) = 5'-deoxyinosine + NH4(+). It carries out the reaction S-adenosyl-L-homocysteine + H2O + H(+) = S-inosyl-L-homocysteine + NH4(+). It catalyses the reaction S-methyl-5'-thioadenosine + H2O + H(+) = S-methyl-5'-thioinosine + NH4(+). The enzyme catalyses adenosine + H2O + H(+) = inosine + NH4(+). It functions in the pathway amino-acid biosynthesis; S-adenosyl-L-methionine biosynthesis. Its function is as follows. Catalyzes the deamination of three SAM-derived enzymatic products, namely 5'-deoxyadenosine, S-adenosyl-L-homocysteine, and 5'-methylthioadenosine, to produce the inosine analogs. Can also deaminate adenosine. The preferred substrate for this enzyme is 5'-deoxyadenosine, but all these substrates are efficiently deaminated. Likely functions in a S-adenosyl-L-methionine (SAM) recycling pathway from S-adenosyl-L-homocysteine (SAH) produced from SAM-dependent methylation reactions. May also be involved in the recycling of 5'-deoxyadenosine, whereupon the 5'-deoxyribose moiety of 5'-deoxyinosine is further metabolized to deoxyhexoses used for the biosynthesis of aromatic amino acids in methanogens. The chain is 5'-deoxyadenosine deaminase from Methanopyrus kandleri (strain AV19 / DSM 6324 / JCM 9639 / NBRC 100938).